The chain runs to 450 residues: Tubulin alpha-6 chain (450 aa).

GTP contacts are provided by Gln11, Glu71, Gly144, Thr145, Thr179, Asn206, and Asn228. Glu71 is a Mg(2+) binding site. Glu254 is a catalytic residue.

This sequence belongs to the tubulin family. In terms of assembly, dimer of alpha and beta chains. A typical microtubule is a hollow water-filled tube with an outer diameter of 25 nm and an inner diameter of 15 nM. Alpha-beta heterodimers associate head-to-tail to form protofilaments running lengthwise along the microtubule wall with the beta-tubulin subunit facing the microtubule plus end conferring a structural polarity. Microtubules usually have 13 protofilaments but different protofilament numbers can be found in some organisms and specialized cells. It depends on Mg(2+) as a cofactor. Undergoes a tyrosination/detyrosination cycle, the cyclic removal and re-addition of a C-terminal tyrosine residue by the enzymes tubulin tyrosine carboxypeptidase (TTCP) and tubulin tyrosine ligase (TTL), respectively.

It is found in the cytoplasm. It localises to the cytoskeleton. It carries out the reaction GTP + H2O = GDP + phosphate + H(+). Functionally, tubulin is the major constituent of microtubules, a cylinder consisting of laterally associated linear protofilaments composed of alpha- and beta-tubulin heterodimers. Microtubules grow by the addition of GTP-tubulin dimers to the microtubule end, where a stabilizing cap forms. Below the cap, tubulin dimers are in GDP-bound state, owing to GTPase activity of alpha-tubulin. The chain is Tubulin alpha-6 chain (TUBA6) from Zea mays (Maize).